The chain runs to 274 residues: Rhamnulose-1-phosphate aldolase (274 aa).

The active site involves Glu117. Residues His141, His143, and His212 each coordinate Zn(2+).

This sequence belongs to the aldolase class II family. RhaD subfamily. As to quaternary structure, homotetramer. Requires Zn(2+) as cofactor.

It localises to the cytoplasm. The enzyme catalyses L-rhamnulose 1-phosphate = (S)-lactaldehyde + dihydroxyacetone phosphate. Its pathway is carbohydrate degradation; L-rhamnose degradation; glycerone phosphate from L-rhamnose: step 3/3. Functionally, catalyzes the reversible cleavage of L-rhamnulose-1-phosphate to dihydroxyacetone phosphate (DHAP) and L-lactaldehyde. This Escherichia coli (strain K12 / MC4100 / BW2952) protein is Rhamnulose-1-phosphate aldolase.